The chain runs to 261 residues: tRNA 5-carboxymethoxyuridine methyltransferase (261 aa).

S-adenosyl-L-methionine contacts are provided by residues R26, 52-53 (GG), D73, 102-103 (AQ), and H119.

This sequence belongs to the class I-like SAM-binding methyltransferase superfamily. CmoM family. As to quaternary structure, homodimer.

The catalysed reaction is 5-carboxymethoxyuridine(34) in tRNA + S-adenosyl-L-methionine = 5-methoxycarbonylmethoxyuridine(34) in tRNA + S-adenosyl-L-homocysteine. Functionally, catalyzes the methylation of 5-carboxymethoxyuridine (cmo5U) to form 5-methoxycarbonylmethoxyuridine (mcmo5U) at position 34 in tRNAs. The polypeptide is tRNA 5-carboxymethoxyuridine methyltransferase (Escherichia coli O157:H7).